A 354-amino-acid polypeptide reads, in one-letter code: Heat-inducible transcription repressor HrcA (354 aa).

Belongs to the HrcA family.

Negative regulator of class I heat shock genes (grpE-dnaK-dnaJ and groELS operons). Prevents heat-shock induction of these operons. The sequence is that of Heat-inducible transcription repressor HrcA from Novosphingobium aromaticivorans (strain ATCC 700278 / DSM 12444 / CCUG 56034 / CIP 105152 / NBRC 16084 / F199).